We begin with the raw amino-acid sequence, 90 residues long: Bombyxin B-5 (90 aa).

The signal sequence occupies residues 1 to 20 (MMKTAVMFILVVVISLTYSS). Disulfide bonds link Cys-30-Cys-75, Cys-42-Cys-88, and Cys-74-Cys-79. A propeptide spans 49–64 (GGAQYAPYWQETYLRS) (c peptide like).

The protein belongs to the insulin family. Heterodimer of a B chain and an A chain linked by two disulfide bonds.

The protein localises to the secreted. Its function is as follows. Brain peptide responsible for activation of prothoracic glands to produce ecdysone in insects. This is Bombyxin B-5 (BBXB5) from Bombyx mori (Silk moth).